A 202-amino-acid polypeptide reads, in one-letter code: Ribonuclease HII (202 aa).

The 190-residue stretch at 13–202 (KIEAGLDEAG…HFKPKQLDLF (190 aa)) folds into the RNase H type-2 domain. A divalent metal cation is bound by residues Asp19, Glu20, and Asp112.

It belongs to the RNase HII family. Mn(2+) is required as a cofactor. It depends on Mg(2+) as a cofactor.

The protein localises to the cytoplasm. It carries out the reaction Endonucleolytic cleavage to 5'-phosphomonoester.. In terms of biological role, endonuclease that specifically degrades the RNA of RNA-DNA hybrids. This chain is Ribonuclease HII, found in Cytophaga hutchinsonii (strain ATCC 33406 / DSM 1761 / CIP 103989 / NBRC 15051 / NCIMB 9469 / D465).